Here is a 538-residue protein sequence, read N- to C-terminus: Chaperonin GroEL (538 aa).

Residues 29 to 32, 86 to 90, Gly-413, 479 to 481, and Asp-495 contribute to the ATP site; these read TLGP, DGTTT, and DAL.

It belongs to the chaperonin (HSP60) family. Forms a cylinder of 14 subunits composed of two heptameric rings stacked back-to-back. Interacts with the co-chaperonin GroES.

It localises to the cytoplasm. The catalysed reaction is ATP + H2O + a folded polypeptide = ADP + phosphate + an unfolded polypeptide.. In terms of biological role, together with its co-chaperonin GroES, plays an essential role in assisting protein folding. The GroEL-GroES system forms a nano-cage that allows encapsulation of the non-native substrate proteins and provides a physical environment optimized to promote and accelerate protein folding. This Fervidobacterium nodosum (strain ATCC 35602 / DSM 5306 / Rt17-B1) protein is Chaperonin GroEL.